We begin with the raw amino-acid sequence, 86 residues long: MRKDIHPDYRPVVFLDTTTGYKFLSGSTKSSKETIEFEGETYPLIRVEISSDSHPFYTGRQKFTQADGRVDRFNKKYGLKDANAAK.

This sequence belongs to the bacterial ribosomal protein bL31 family. Type B subfamily. Part of the 50S ribosomal subunit.

This is Large ribosomal subunit protein bL31B from Streptococcus uberis (strain ATCC BAA-854 / 0140J).